Here is a 271-residue protein sequence, read N- to C-terminus: Co-chaperone protein DjlA (271 aa).

At 1 to 6 (MQYWGK) the chain is on the periplasmic side. Residues 7 to 31 (IIGVAVALIMGGGFWGVVLGLLIGH) form a helical membrane-spanning segment. The Cytoplasmic portion of the chain corresponds to 32–271 (MFDKARSRKM…ELIKQQKGFK (240 aa)). The region spanning 205 to 271 (DACNVLGVKP…ELIKQQKGFK (67 aa)) is the J domain.

In terms of assembly, homodimer.

It localises to the cell inner membrane. Functionally, regulatory DnaK co-chaperone. Direct interaction between DnaK and DjlA is needed for the induction of the wcaABCDE operon, involved in the synthesis of a colanic acid polysaccharide capsule, possibly through activation of the RcsB/RcsC phosphotransfer signaling pathway. The colanic acid capsule may help the bacterium survive conditions outside the host. This chain is Co-chaperone protein DjlA, found in Escherichia coli O6:H1 (strain CFT073 / ATCC 700928 / UPEC).